The following is a 457-amino-acid chain: Casein kinase 1-like protein 11 (457 aa).

A Protein kinase domain is found at 15–284 (FKLGRKLGSG…LRRLFRDLFI (270 aa)). ATP is bound by residues 21–29 (LGSGSFGEL) and K44. Residue D134 is the Proton acceptor of the active site. Disordered stretches follow at residues 305-337 (GSSS…GQDL) and 352-442 (NVSS…EDAI). Residues 311–324 (RPTPRPALDPPGPP) are compositionally biased toward pro residues. Composition is skewed to polar residues over residues 383–403 (NGST…SAEP) and 409–429 (SRLF…QSYE).

Belongs to the protein kinase superfamily. CK1 Ser/Thr protein kinase family. Casein kinase I subfamily. Monomer. Autophosphorylated.

It localises to the cytoplasm. Its subcellular location is the nucleus. The catalysed reaction is L-seryl-[protein] + ATP = O-phospho-L-seryl-[protein] + ADP + H(+). It carries out the reaction L-threonyl-[protein] + ATP = O-phospho-L-threonyl-[protein] + ADP + H(+). With respect to regulation, partially inhibited by N-(2-aminoethyl)-5-chloroisoquinoline-8-sulfonamide (CKI-7). Casein kinases are operationally defined by their preferential utilization of acidic proteins such as caseins as substrates. Can phosphorylate casein, phosvitin, myosin light chains and poly(Glu,Tyr) in vitro. In Arabidopsis thaliana (Mouse-ear cress), this protein is Casein kinase 1-like protein 11.